The primary structure comprises 341 residues: Ribonucleoside-diphosphate reductase small chain A (341 aa).

The interval 1–20 (MGSLKEGQGRDMEEGESEEP) is disordered. Residues Asp-87, Glu-118, and His-121 each contribute to the Fe cation site. Residue Tyr-125 is part of the active site. 3 residues coordinate Fe cation: Glu-180, Glu-214, and His-217.

Belongs to the ribonucleoside diphosphate reductase small chain family. Homodimer and heterodimer with TSO2. Heterotetramer of two R1 and two R2 chains. A radical transfer pathway may occur between Tyr-125 of protein R2 and R1. Homodimer contains a dinuclear non-heme iron center and a stable tyrosyl radical essential for activity. A transfer pathway may occur between Tyr-125 of protein R2 and R1. Interacts with CSN7. Fe cation serves as cofactor. Expressed in rosette leaves, cauline leaves, stems and flowers.

The protein localises to the cytoplasm. The catalysed reaction is a 2'-deoxyribonucleoside 5'-diphosphate + [thioredoxin]-disulfide + H2O = a ribonucleoside 5'-diphosphate + [thioredoxin]-dithiol. With respect to regulation, inhibited by phenol, paracetamol, 2,4,6-trimethylphenol, resveratrol, furfuryl mercaptan, 2-thiophenthiol, phenylhydrazine, and hydroxyurea. In terms of biological role, provides the precursors necessary for DNA synthesis. Catalyzes the biosynthesis of deoxyribonucleotides from the corresponding ribonucleotides. In Arabidopsis thaliana (Mouse-ear cress), this protein is Ribonucleoside-diphosphate reductase small chain A (RNR2A).